A 941-amino-acid polypeptide reads, in one-letter code: Protein UL87 (941 aa).

Asn-37 carries N-linked (GlcNAc...) asparagine; by host glycosylation. Residues 482–508 (QRRSETGEEEEEETLESGETDATPPFD) are disordered. Residues 488-500 (GEEEEEETLESGE) show a composition bias toward acidic residues. Asn-591, Asn-661, and Asn-801 each carry an N-linked (GlcNAc...) asparagine; by host glycan. Residues 910 to 929 (VSSSSSVPSVPTSVSVDGSS) show a composition bias toward low complexity. The tract at residues 910-941 (VSSSSSVPSVPTSVSVDGSSEPTSPRARFASR) is disordered.

Belongs to the herpesviridae UL87 family.

The protein resides in the host nucleus. Functions concordantly with UL87 to initiate transcription from over half of all active viral promoters in late infection, without affecting host transcription. Acts on and binds to viral early-late and late kinetic-class promoters. The chain is Protein UL87 (UL87) from Homo sapiens (Human).